We begin with the raw amino-acid sequence, 86 residues long: Gas vesicle protein A1 (86 aa).

It belongs to the gas vesicle GvpA family. In terms of assembly, the gas vesicle shell is 2 nm thick and consists of a single layer of this protein. It forms helical ribs nearly perpendicular to the long axis of the vesicle.

The protein resides in the gas vesicle shell. Its function is as follows. Gas vesicles are hollow, gas filled proteinaceous nanostructures found in some microorganisms. During planktonic growth they allow positioning of the organism at a favorable depth for light or nutrient acquisition. GvpA forms the protein shell. Functionally, it is not clear if the 2 type A proteins in this organism are functionally redundant. When the full gvp locus (gvpA1-gvpP-gvpQ-gvpA2-gvpR-gvpN-gvpF-gvpG-gvpL-gvpS-gvpK-gvpJ-gvpT-gvpU, called pNL26) is expressed in E.coli gas vesicles are made. The sequence is that of Gas vesicle protein A1 from Priestia megaterium (Bacillus megaterium).